We begin with the raw amino-acid sequence, 724 residues long: Probable ATP-dependent RNA helicase DDX4 (724 aa).

The tract at residues 1 to 246 is disordered; sequence MGDEDWEAEI…SDTQGPKVTY (246 aa). The span at 30 to 42 shows a compositional bias: polar residues; the sequence is NGDNFNRTPASSS. Over residues 69–78 the composition is skewed to basic and acidic residues; that stretch reads DAGECNKRDN. Residues 150–162 are compositionally biased toward gly residues; sequence RGSFRGCRGGFGL. Residues 195-205 show a composition bias toward low complexity; the sequence is GDTSQSRSGSG. 2 positions are modified to phosphoserine: Ser222 and Ser226. The interaction with RANBP9 stretch occupies residues 228 to 247; sequence KSEAEGGESSDTQGPKVTYI. The short motif at 288–316 is the Q motif element; the sequence is LTFEEANLCQTLNNNIAKAGYTKLTPVQK. Residues 319–502 enclose the Helicase ATP-binding domain; the sequence is IPIILAGRDL…AEFLKSNYLF (184 aa). 332–339 contributes to the ATP binding site; sequence AQTGSGKT. The DEAD box signature appears at 446–449; sequence DEAD. The Helicase C-terminal domain maps to 530–675; the sequence is KLVEILRNIG…DVPAWLEEIA (146 aa). Positions 704–715 are enriched in polar residues; it reads LNTAGFSSSQAP. Positions 704 to 724 are disordered; the sequence is LNTAGFSSSQAPNPVDDESWD. Position 722 is a phosphoserine (Ser722).

This sequence belongs to the DEAD box helicase family. DDX4/VASA subfamily. In terms of assembly, found in a mRNP complex, at least composed of TDRD1, TDRD6, TDRD7 and DDX4. Interacts with RANBP9. Interacts with RANBP10. Interacts with PIWIL2 and MAEL. Interacts with BMAL1 and CLOCK. Interacts with Tex19.1 and, probably, Tex19.2. Interacts with RBM46. Expressed only in ovary and testis. Expressed in migratory primordial germ cells in the region of the gonadal ridge in both sexes.

It localises to the cytoplasm. The protein resides in the perinuclear region. It catalyses the reaction ATP + H2O = ADP + phosphate + H(+). ATP-dependent RNA helicase required during spermatogenesis. Required to repress transposable elements and preventing their mobilization, which is essential for the germline integrity. Acts via the piRNA metabolic process, which mediates the repression of transposable elements during meiosis by forming complexes composed of piRNAs and Piwi proteins and governs the methylation and subsequent repression of transposons. Involved in the secondary piRNAs metabolic process, the production of piRNAs in fetal male germ cells through a ping-pong amplification cycle. Required for PIWIL2 slicing-triggered piRNA biogenesis: helicase activity enables utilization of one of the slice cleavage fragments generated by PIWIL2 and processing these pre-piRNAs into piRNAs. The chain is Probable ATP-dependent RNA helicase DDX4 (DDX4) from Homo sapiens (Human).